A 3291-amino-acid polypeptide reads, in one-letter code: Protocadherin-16 (3291 aa).

The N-terminal stretch at 1–35 is a signal peptide; sequence MQEELSVALSCPGMKSLGTLLPLLVLLGTTVPGIR. At 36–2933 the chain is on the extracellular side; that stretch reads GQAGSLDLQI…PDLNLLLVGA (2898 aa). Cadherin domains are found at residues 37–137, 138–249, 250–356, 369–466, 476–572, 573–679, 680–784, 785–888, 889–994, 995–1105, 1100–1205, 1218–1317, 1326–1429, 1430–1539, 1539–1642, 1643–1744, 1745–1848, 1849–1953, 1976–2061, 2062–2164, 2165–2270, 2270–2369, 2370–2475, 2476–2595, 2596–2699, 2700–2806, and 2807–2926; these read QAGS…APAF, PQAR…APAF, NQSR…QPSM, VSEA…APAF, LPEV…EPQF, QRTF…PPQF, YPRE…PPIF, EQLQ…SPAF, PAPE…APRF, DSPT…EPTF, SEEP…SPTF, IQVP…SPDL, VPVV…APAF, ARDP…APVF, FASP…APAF, PQQE…SPTF, GNTH…APAF, PVPS…APAF, LATL…GPRF, PRAN…APRF, LQPH…RPTI, IPQP…VPIF, SQSL…APSF, TLPH…PPVF, TRAS…GPAF, PLSL…DPVF, and LAPS…APDL. N396 is a glycosylation site (N-linked (GlcNAc...) asparagine). The segment at 951-971 is disordered; the sequence is GPPGGPPHELEVEAQDGGSPP. Residue N1711 is glycosylated (N-linked (GlcNAc...) asparagine). The N-linked (GlcNAc...) asparagine glycan is linked to N2354. The N-linked (GlcNAc...) asparagine glycan is linked to N2562. A helical membrane pass occupies residues 2934–2954; it reads VAASLGVVVVLALAALVLGLV. Residues 2955–3291 are Cytoplasmic-facing; the sequence is RARSRKAEAA…EPPDDTELRI (337 aa). A disordered region spans residues 2978 to 3033; the sequence is SLQKLGREPPSPPPSEHLYHQTLPSYGGPGAGGPYPRGGSLDPSHSSGRGSAEAAE. Residues 3004–3013 show a composition bias toward gly residues; that stretch reads GGPGAGGPYP. Position 3048 is a phosphoserine (S3048). Disordered regions lie at residues 3051 to 3080 and 3226 to 3291; these read SSLA…PAPD and ASHR…ELRI. Low complexity predominate over residues 3237 to 3259; that stretch reads SLSSAAMSPSFSPSLSPLAARSP. Residues 3270–3279 show a composition bias toward polar residues; it reads PSASALSTES.

As to quaternary structure, heterophilic interaction with FAT4; this interaction affects their respective protein levels.

It localises to the cell membrane. Calcium-dependent cell-adhesion protein. Mediates functions in neuroprogenitor cell proliferation and differentiation. This is Protocadherin-16 (Dchs1) from Rattus norvegicus (Rat).